A 173-amino-acid polypeptide reads, in one-letter code: MQKVKLPLTLDPVRTAQKRLDYQGIYTPDQVERVAESVVSVDSDVECSMSFAIDNQRLAVLNGDAKVTVTLECQRCGKPFTHQVYTTYCFSPVRSDEQAEALPEAYEPIEVNEFGEIDLLAMVEDEIILALPVVPVHDSEHCEVSEADMVFGELPEEAQKPNPFAVLASLKRK.

The protein belongs to the DUF177 domain family.

Its function is as follows. Plays a role in synthesis, processing and/or stability of 23S rRNA. The polypeptide is Large ribosomal RNA subunit accumulation protein YceD (yceD) (Escherichia coli O157:H7).